The following is a 171-amino-acid chain: Protein FAM209A (171 aa).

The first 19 residues, 1–19 (MWTLKSSLVLLLCLTCSYA), serve as a signal peptide directing secretion. At 20–52 (FMFSSLRQKTSEPQGKVQYGEHFRIRQNLPEHT) the chain is on the extracellular side. Residues 53–73 (QGWLGSKWLWLLFVVVPFVIL) traverse the membrane as a helical segment. Topologically, residues 74–171 (QCQRDSEKNK…CEIWGEESSS (98 aa)) are cytoplasmic. The tract at residues 81-107 (KNKEQSPPGLRGGQLHSPLKKKRNASP) is disordered. Positions 114 to 139 (NTLMELEVELMKFVSKVRNLKRAMAT) form a coiled coil.

The protein belongs to the FAM209 family. As to quaternary structure, interacts with DPY19L2. Interacts with CYLC1; the interaction may be relevant for proper acrosome attachment to the nuclear envelope.

It localises to the nucleus inner membrane. Functionally, may play a role in sperm acrosome biogenesis. The protein is Protein FAM209A of Homo sapiens (Human).